The primary structure comprises 912 residues: Phosphatidylinositol-3-phosphatase SAC1 (912 aa).

Residues 1 to 29 (MAKSENSTTSTFSSFANKIQPSNDAESDP) form a disordered region. An SAC domain is found at 173-575 (LSSVDLTKDF…GDALAQQYGG (403 aa)). The Phosphatase catalytic core motif lies at 511 to 522 (RTNCIDCLDRTN). The interval 715-912 (RPGGNTGSTG…VGDDKVPKVI (198 aa)) is required for subcellular localization. Residues 740 to 766 (LFGSRKPEESSSATKSGADDSEKGVTS) are disordered.

Component of the PI(3,5)P2 regulatory complex at least composed of ATG18, SAC/FIG4, FAB1 and VAC14. Mg(2+) serves as cofactor. Ubiquitous with higher expression level in both young elongating and nonelongating stems. Detected in vascular tissues.

The protein resides in the vacuole membrane. Its subcellular location is the golgi apparatus. The enzyme catalyses a 1,2-diacyl-sn-glycero-3-phospho-(1D-myo-inositol-3-phosphate) + H2O = a 1,2-diacyl-sn-glycero-3-phospho-(1D-myo-inositol) + phosphate. It carries out the reaction a 1,2-diacyl-sn-glycero-3-phospho-(1D-myo-inositol-3,5-bisphosphate) + H2O = a 1,2-diacyl-sn-glycero-3-phospho-(1D-myo-inositol-3-phosphate) + phosphate. The catalysed reaction is a 1,2-diacyl-sn-glycero-3-phospho-(1D-myo-inositol 4-phosphate) + H2O = a 1,2-diacyl-sn-glycero-3-phospho-(1D-myo-inositol) + phosphate. Phosphoinositide phosphatase which catalyzes the hydrolysis of phosphatidylinositol-3,5-bisphosphate (PtdIns(3,5)P2). Can also catalyze the hydrolysis of phosphatidylinositol 3-phosphate (PtdIns(3)P) and phosphatidylinositol 4-phosphate (PtdIns(4)P). Required for normal cell morphogenesis, cell wall synthesis, and actin organization. The sequence is that of Phosphatidylinositol-3-phosphatase SAC1 (SAC1) from Arabidopsis thaliana (Mouse-ear cress).